Here is a 376-residue protein sequence, read N- to C-terminus: Histidinol-phosphate aminotransferase 1 (376 aa).

Lys-235 carries the N6-(pyridoxal phosphate)lysine modification.

Belongs to the class-II pyridoxal-phosphate-dependent aminotransferase family. Histidinol-phosphate aminotransferase subfamily. In terms of assembly, homodimer. Requires pyridoxal 5'-phosphate as cofactor.

It carries out the reaction L-histidinol phosphate + 2-oxoglutarate = 3-(imidazol-4-yl)-2-oxopropyl phosphate + L-glutamate. It functions in the pathway amino-acid biosynthesis; L-histidine biosynthesis; L-histidine from 5-phospho-alpha-D-ribose 1-diphosphate: step 7/9. The chain is Histidinol-phosphate aminotransferase 1 from Cupriavidus pinatubonensis (strain JMP 134 / LMG 1197) (Cupriavidus necator (strain JMP 134)).